The chain runs to 26 residues: GLWKNMLSGIGKLAGEAALGAVKTLV.

V26 is modified (valine amide).

As to expression, expressed by the skin glands.

Its subcellular location is the secreted. In terms of biological role, has antimicrobial activity. This chain is Dermaseptin-J2, found in Phasmahyla jandaia (Jandaia leaf frog).